The following is a 500-amino-acid chain: Glycogen synthase (500 aa).

Residue Lys15 coordinates ADP-alpha-D-glucose.

Belongs to the glycosyltransferase 1 family. Bacterial/plant glycogen synthase subfamily.

The enzyme catalyses [(1-&gt;4)-alpha-D-glucosyl](n) + ADP-alpha-D-glucose = [(1-&gt;4)-alpha-D-glucosyl](n+1) + ADP + H(+). The protein operates within glycan biosynthesis; glycogen biosynthesis. Synthesizes alpha-1,4-glucan chains using ADP-glucose. This is Glycogen synthase from Protochlamydia amoebophila (strain UWE25).